Reading from the N-terminus, the 141-residue chain is Putative pre-16S rRNA nuclease (141 aa).

It belongs to the YqgF nuclease family.

The protein resides in the cytoplasm. Could be a nuclease involved in processing of the 5'-end of pre-16S rRNA. The protein is Putative pre-16S rRNA nuclease of Cupriavidus taiwanensis (strain DSM 17343 / BCRC 17206 / CCUG 44338 / CIP 107171 / LMG 19424 / R1) (Ralstonia taiwanensis (strain LMG 19424)).